Here is a 159-residue protein sequence, read N- to C-terminus: 2-C-methyl-D-erythritol 2,4-cyclodiphosphate synthase (159 aa).

Residues aspartate 10 and histidine 12 each contribute to the a divalent metal cation site. 4-CDP-2-C-methyl-D-erythritol 2-phosphate-binding positions include 10–12 and 37–38; these read DVH and HS. Histidine 45 is a binding site for a divalent metal cation. Residues 59 to 61, 64 to 68, 103 to 109, 135 to 138, phenylalanine 142, and arginine 145 each bind 4-CDP-2-C-methyl-D-erythritol 2-phosphate; these read DIG, FLDTD, AQAPKML, and TTTE.

It belongs to the IspF family. In terms of assembly, homotrimer. A divalent metal cation is required as a cofactor.

It carries out the reaction 4-CDP-2-C-methyl-D-erythritol 2-phosphate = 2-C-methyl-D-erythritol 2,4-cyclic diphosphate + CMP. Its pathway is isoprenoid biosynthesis; isopentenyl diphosphate biosynthesis via DXP pathway; isopentenyl diphosphate from 1-deoxy-D-xylulose 5-phosphate: step 4/6. Its function is as follows. Involved in the biosynthesis of isopentenyl diphosphate (IPP) and dimethylallyl diphosphate (DMAPP), two major building blocks of isoprenoid compounds. Catalyzes the conversion of 4-diphosphocytidyl-2-C-methyl-D-erythritol 2-phosphate (CDP-ME2P) to 2-C-methyl-D-erythritol 2,4-cyclodiphosphate (ME-CPP) with a corresponding release of cytidine 5-monophosphate (CMP). The polypeptide is 2-C-methyl-D-erythritol 2,4-cyclodiphosphate synthase (Francisella tularensis subsp. tularensis (strain FSC 198)).